A 451-amino-acid chain; its full sequence is Cyclin-dependent kinase 14 (451 aa).

Phosphoserine is present on residues Ser60 and Ser77. Residues 84–114 (NFKTSSTGKESPKVRRHSSPSSPTSPKFGKA) form a disordered region. A Phosphoserine modification is found at Ser116. The Protein kinase domain maps to 117–401 (YEKLEKLGEG…AQAALSHEYF (285 aa)). Residues 123–131 (LGEGSYATV) and Lys146 contribute to the ATP site. Residue Asp238 is the Proton acceptor of the active site.

It belongs to the protein kinase superfamily. CMGC Ser/Thr protein kinase family. CDC2/CDKX subfamily. In terms of assembly, found in a complex with LRP6, CCNY and CAPRIN2 during G2/M stage; CAPRIN2 functions as a scaffold for the complex by binding to CCNY via its N terminus and to CDK14 via its C terminus. Interacts with CCNY; CCNY mediates its recruitment to the plasma membrane and promotes phosphorylation of LRP6. Interacts with CCDN3 and CDKN1A. Interacts with SEPT8. Interacts with 14-3-3 proteina YWHAB, YWHAE, YWHAH and YWHAQ.

The protein resides in the cell membrane. It localises to the cytoplasm. The protein localises to the nucleus. The catalysed reaction is L-seryl-[protein] + ATP = O-phospho-L-seryl-[protein] + ADP + H(+). The enzyme catalyses L-threonyl-[protein] + ATP = O-phospho-L-threonyl-[protein] + ADP + H(+). Its activity is regulated as follows. Serine/threonine-protein kinase activity is promoted by associated cyclins CCDN3 and CCNY and repressed by CDKN1A. Functionally, serine/threonine-protein kinase involved in the control of the eukaryotic cell cycle, whose activity is controlled by an associated cyclin. Acts as a cell-cycle regulator of Wnt signaling pathway during G2/M phase by mediating the phosphorylation of LRP6 at 'Ser-1490', leading to the activation of the Wnt signaling pathway. Acts as a regulator of cell cycle progression and cell proliferation via its interaction with CCDN3. Phosphorylates RB1 in vitro, however the relevance of such result remains to be confirmed in vivo. May also play a role in meiosis, neuron differentiation and may indirectly act as a negative regulator of insulin-responsive glucose transport. The sequence is that of Cyclin-dependent kinase 14 (CDK14) from Plecturocebus moloch (Dusky titi monkey).